A 227-amino-acid chain; its full sequence is 2,3-bisphosphoglycerate-dependent phosphoglycerate mutase (227 aa).

Substrate contacts are provided by residues 8–15, 21–22, arginine 58, 110–113, lysine 121, 137–138, and 181–182; these read RHGKSVWN, TG, ERMY, RR, and GN. The Tele-phosphohistidine intermediate role is filled by histidine 9. The active-site Proton donor/acceptor is glutamate 110.

This sequence belongs to the phosphoglycerate mutase family. BPG-dependent PGAM subfamily.

The enzyme catalyses (2R)-2-phosphoglycerate = (2R)-3-phosphoglycerate. It functions in the pathway carbohydrate degradation; glycolysis; pyruvate from D-glyceraldehyde 3-phosphate: step 3/5. Functionally, catalyzes the interconversion of 2-phosphoglycerate and 3-phosphoglycerate. This Chlamydia abortus (strain DSM 27085 / S26/3) (Chlamydophila abortus) protein is 2,3-bisphosphoglycerate-dependent phosphoglycerate mutase.